An 883-amino-acid polypeptide reads, in one-letter code: Leucine--tRNA ligase (883 aa).

Residues 43–53 (PYPSGRIHIGH) carry the 'HIGH' region motif. The 'KMSKS' region signature appears at 630 to 634 (KMSKS). An ATP-binding site is contributed by Lys633.

Belongs to the class-I aminoacyl-tRNA synthetase family.

The protein localises to the cytoplasm. It carries out the reaction tRNA(Leu) + L-leucine + ATP = L-leucyl-tRNA(Leu) + AMP + diphosphate. This is Leucine--tRNA ligase from Nitrobacter winogradskyi (strain ATCC 25391 / DSM 10237 / CIP 104748 / NCIMB 11846 / Nb-255).